The chain runs to 898 residues: Aconitate hydratase 1 (898 aa).

Residue A2 is modified to N-acetylalanine. Substrate-binding positions include Q90 and 209-211 (DSH). Positions 441, 507, and 510 each coordinate [4Fe-4S] cluster. Substrate-binding positions include R540, R545, R703, and 784 to 785 (SR).

The protein belongs to the aconitase/IPM isomerase family. In terms of assembly, monomer. [4Fe-4S] cluster serves as cofactor. Mostly expressed in roots, stems and leaves, also present in stems and flowers.

The protein localises to the cytoplasm. The protein resides in the mitochondrion. The catalysed reaction is citrate = D-threo-isocitrate. It participates in carbohydrate metabolism; tricarboxylic acid cycle; isocitrate from oxaloacetate: step 2/2. In terms of biological role, catalyzes the isomerization of citrate to isocitrate via cis-aconitate. Contributes to oxidative stress tolerance. May have a role in respiration. The chain is Aconitate hydratase 1 from Arabidopsis thaliana (Mouse-ear cress).